The primary structure comprises 313 residues: Dioxygenase swnH2 (313 aa).

3 residues coordinate Fe cation: His155, Asp157, and His232.

The protein belongs to the PhyH family. As to quaternary structure, homodimer. Fe cation serves as cofactor.

It functions in the pathway mycotoxin biosynthesis. Functionally, aminotransferase; part of the gene cluster that mediates the biosynthesis of swainsonine (SW), a cytotoxic fungal alkaloid and a potential cancer therapy drug. Swainsonine production occurs via a multibranched pathway and is dispensable for fungal colonization of plants and infection of insect hosts. The first step of swainsonine biosynthesis is the production of the precursor pipecolic acid (PA) via conversion of L-lysine (Lys) to 1-piperideine-6-carboxylate (P6C) by the aminotransferase swnA, the latter being further reduced to PA by the reductase swnR. The PKS-NRPS hybrid synthetase swnK uptakes and condensates PA and malonyl-CoA with and without skipping of the ketoreductase (KR) domain in order to produce 3 intermediates, 1-oxoindolizidine, (1S)-1-hydroxyindolizin, and (1R)-1-hydroxyindolizine; with the transisomer (1S)-1-hydroxyindolizin being predominant. The terminal thioester reductase (TE) domain of swnK is involved in reduction of the thioester bond to release the intermediate aldehydes. The oxidoreductase swnN could contribute to the reduction of 1-oxoindolizidine to (1S)-1-hydroxyindolizin and (1R)-1-hydroxyindolizine, contributing to the major route of SW production. The dioxygenase swnH2 would be responsible for the oxidization of (1R)-1-hydroxyindolizine into (1R,2S)-1,2-dihydroxyindolizine and of (1S)-1-hydroxyindolizin to yield both (1R,2S)-1,2-dihydroxyindolizine and (1S,2S)-1,2-dihydroxyindolizine. The dioxygenase swnH1 then performs the conversion of the 1,2-dihydroxyindolizine epimers to SW. The protein is Dioxygenase swnH2 of Arthroderma benhamiae (strain ATCC MYA-4681 / CBS 112371) (Trichophyton mentagrophytes).